Reading from the N-terminus, the 202-residue chain is Small ribosomal subunit protein uS4c (202 aa).

Positions 90 to 153 (MRLDNVIFRL…KSETIISKNI (64 aa)) constitute an S4 RNA-binding domain.

The protein belongs to the universal ribosomal protein uS4 family. In terms of assembly, part of the 30S ribosomal subunit. Contacts protein S5. The interaction surface between S4 and S5 is involved in control of translational fidelity.

The protein resides in the plastid. It is found in the chloroplast. Its function is as follows. One of the primary rRNA binding proteins, it binds directly to 16S rRNA where it nucleates assembly of the body of the 30S subunit. With S5 and S12 plays an important role in translational accuracy. The chain is Small ribosomal subunit protein uS4c (rps4) from Sphaerocarpos donnelli (Liverwort).